The primary structure comprises 427 residues: Trigger factor (427 aa).

One can recognise a PPIase FKBP-type domain in the interval 163–248 (GDTVVIDFVG…VNEVKAKEVP (86 aa)).

It belongs to the FKBP-type PPIase family. Tig subfamily.

It is found in the cytoplasm. The enzyme catalyses [protein]-peptidylproline (omega=180) = [protein]-peptidylproline (omega=0). In terms of biological role, involved in protein export. Acts as a chaperone by maintaining the newly synthesized protein in an open conformation. Functions as a peptidyl-prolyl cis-trans isomerase. In Streptococcus thermophilus (strain CNRZ 1066), this protein is Trigger factor.